We begin with the raw amino-acid sequence, 412 residues long: Peptidase T (412 aa).

H81 contributes to the Zn(2+) binding site. D83 is a catalytic residue. Residue D144 participates in Zn(2+) binding. Residue E178 is the Proton acceptor of the active site. The Zn(2+) site is built by E179, D201, and H383.

This sequence belongs to the peptidase M20B family. Zn(2+) is required as a cofactor.

Its subcellular location is the cytoplasm. The catalysed reaction is Release of the N-terminal residue from a tripeptide.. Cleaves the N-terminal amino acid of tripeptides. The polypeptide is Peptidase T (Bacillus cereus (strain ZK / E33L)).